Consider the following 162-residue polypeptide: MDFDNLLNLEEQYYQEGFLEGQNENIKQSFLEGKQYGLQVGFQRFTLLGQMEGLCDVIESYGLHSPTLEKNIHTIRTLMKGLKMNNDDESVMEFERVLIKLKNKFRTILITLHRLVKDKRTPTVTFEVFEDVSRAIAGEIRGFVENEDIAKNKTKQNQAQSW.

The deca-GX3 motif; required for interaction with YAE1 and the CIA complex stretch occupies residues 17–53 (GFLEGQNENIKQSFLEGKQYGLQVGFQRFTLLGQMEG).

Belongs to the LTO1 family. In terms of assembly, forms a complex with YAE1; the complex bridges the interaction between the CIA complex and RLI1. Associates with the CIA complex (via its C-terminal tryptophan).

It is found in the nucleus. Essential for life in oxygen, but nonessential under anaerobic conditions. Required for biogenesis of the large ribosomal subunit and initiation of translation in oxygen. The complex LTO1:YAE1 functions as a target specific adapter that recruits apo-RLI1 to the cytosolic iron-sulfur protein assembly (CIA) complex machinery. The chain is Protein LTO1 from Saccharomyces cerevisiae (strain ATCC 204508 / S288c) (Baker's yeast).